The sequence spans 176 residues: MDLPGPIHDFLLVFLGSGLLVGGLGVVLLPNPIFSAFSLGFVLVCISLLYILSNSHFVAAAQLLIYVGAINVLIIFAVMFMNDSEYSTDFNLWTIGNGITSLVCTTILFLLMSTILDTSWYGVIWTTKLNQILEQDLISNSQQIGIHLSTDFFLPFELISIILLVALIGAISVARQ.

The next 5 helical transmembrane spans lie at 10–30, 32–52, 61–81, 92–112, and 152–172; these read FLLV…VLLP, PIFS…LYIL, AQLL…VMFM, LWTI…FLLM, and FFLP…GAIS.

It belongs to the complex I subunit 6 family. In terms of assembly, NDH is composed of at least 16 different subunits, 5 of which are encoded in the nucleus.

The protein localises to the plastid. The protein resides in the chloroplast thylakoid membrane. It catalyses the reaction a plastoquinone + NADH + (n+1) H(+)(in) = a plastoquinol + NAD(+) + n H(+)(out). The catalysed reaction is a plastoquinone + NADPH + (n+1) H(+)(in) = a plastoquinol + NADP(+) + n H(+)(out). Functionally, NDH shuttles electrons from NAD(P)H:plastoquinone, via FMN and iron-sulfur (Fe-S) centers, to quinones in the photosynthetic chain and possibly in a chloroplast respiratory chain. The immediate electron acceptor for the enzyme in this species is believed to be plastoquinone. Couples the redox reaction to proton translocation, and thus conserves the redox energy in a proton gradient. The protein is NAD(P)H-quinone oxidoreductase subunit 6, chloroplastic (ndhG) of Arabidopsis thaliana (Mouse-ear cress).